The following is a 531-amino-acid chain: ATP synthase subunit beta (531 aa).

Positions 1 to 48 (MVKAVTSSKETAKVEKKKSAPRSGVKKAVSKSQAGVKDSSSPVHKSSK) are disordered. Residues 19–29 (SAPRSGVKKAV) show a composition bias toward basic residues. The span at 30 to 44 (SKSQAGVKDSSSPVH) shows a compositional bias: polar residues. 203–210 (GGAGVGKT) is a binding site for ATP.

This sequence belongs to the ATPase alpha/beta chains family. In terms of assembly, F-type ATPases have 2 components, CF(1) - the catalytic core - and CF(0) - the membrane proton channel. CF(1) has five subunits: alpha(3), beta(3), gamma(1), delta(1), epsilon(1). CF(0) has three main subunits: a(1), b(2) and c(9-12). The alpha and beta chains form an alternating ring which encloses part of the gamma chain. CF(1) is attached to CF(0) by a central stalk formed by the gamma and epsilon chains, while a peripheral stalk is formed by the delta and b chains.

Its subcellular location is the cell inner membrane. The catalysed reaction is ATP + H2O + 4 H(+)(in) = ADP + phosphate + 5 H(+)(out). Functionally, produces ATP from ADP in the presence of a proton gradient across the membrane. The catalytic sites are hosted primarily by the beta subunits. This Bartonella henselae (strain ATCC 49882 / DSM 28221 / CCUG 30454 / Houston 1) (Rochalimaea henselae) protein is ATP synthase subunit beta.